Reading from the N-terminus, the 360-residue chain is Protein NDRG2 (360 aa).

The segment at 324–360 is disordered; sequence SRTASLSSEGNRSRSRTLSQSSESGGGPPAPLAEVTC.

Belongs to the NDRG family.

Its subcellular location is the cytoplasm. Its function is as follows. Contributes to the regulation of the Wnt signaling pathway. Down-regulates CTNNB1-mediated transcriptional activation of target genes. May be involved in neuron differentiation. The protein is Protein NDRG2 (ndrg2) of Xenopus laevis (African clawed frog).